We begin with the raw amino-acid sequence, 681 residues long: Sorting nexin-41 (681 aa).

The segment covering 1–12 (MSTDNLFEDIEQ) has biased composition (acidic residues). The segment at 1–94 (MSTDNLFEDI…HNTSLNNGYP (94 aa)) is disordered. The span at 13-24 (DNNPSFYGNPSI) shows a compositional bias: polar residues. In terms of domain architecture, PX spans 113-236 (NDSQLQVDII…KFFDPNYELC (124 aa)). Residues Arg151, Ser153, Lys177, and Arg200 each contribute to the a 1,2-diacyl-sn-glycero-3-phospho-(1D-myo-inositol-3-phosphate) site. Disordered regions lie at residues 475–505 (LASR…TENF) and 558–597 (TATG…QTSI). 2 stretches are compositionally biased toward low complexity: residues 482 to 497 (DNDS…NNND) and 558 to 589 (TATG…QSQS).

The protein belongs to the sorting nexin family.

It is found in the endosome membrane. The protein resides in the endomembrane system. Its function is as follows. May be required for cytoplasm to vacuole transport (Cvt) and pexophagy. This is Sorting nexin-41 (SNX41) from Candida albicans (strain SC5314 / ATCC MYA-2876) (Yeast).